The sequence spans 174 residues: N5-carboxyaminoimidazole ribonucleotide mutase (174 aa).

Substrate-binding residues include serine 16, aspartate 19, and arginine 46.

The protein belongs to the AIR carboxylase family. Class I subfamily.

The catalysed reaction is 5-carboxyamino-1-(5-phospho-D-ribosyl)imidazole + H(+) = 5-amino-1-(5-phospho-D-ribosyl)imidazole-4-carboxylate. Its pathway is purine metabolism; IMP biosynthesis via de novo pathway; 5-amino-1-(5-phospho-D-ribosyl)imidazole-4-carboxylate from 5-amino-1-(5-phospho-D-ribosyl)imidazole (N5-CAIR route): step 2/2. Its function is as follows. Catalyzes the conversion of N5-carboxyaminoimidazole ribonucleotide (N5-CAIR) to 4-carboxy-5-aminoimidazole ribonucleotide (CAIR). The sequence is that of N5-carboxyaminoimidazole ribonucleotide mutase from Mycobacterium tuberculosis (strain CDC 1551 / Oshkosh).